Reading from the N-terminus, the 365-residue chain is tRNA/tmRNA (uracil-C(5))-methyltransferase (365 aa).

S-adenosyl-L-methionine is bound by residues Q189, Y217, N222, E238, and D298. Residue C323 is the Nucleophile of the active site. Residue E357 is the Proton acceptor of the active site.

It belongs to the class I-like SAM-binding methyltransferase superfamily. RNA M5U methyltransferase family. TrmA subfamily.

It carries out the reaction uridine(54) in tRNA + S-adenosyl-L-methionine = 5-methyluridine(54) in tRNA + S-adenosyl-L-homocysteine + H(+). It catalyses the reaction uridine(341) in tmRNA + S-adenosyl-L-methionine = 5-methyluridine(341) in tmRNA + S-adenosyl-L-homocysteine + H(+). In terms of biological role, dual-specificity methyltransferase that catalyzes the formation of 5-methyluridine at position 54 (m5U54) in all tRNAs, and that of position 341 (m5U341) in tmRNA (transfer-mRNA). This is tRNA/tmRNA (uracil-C(5))-methyltransferase from Shewanella denitrificans (strain OS217 / ATCC BAA-1090 / DSM 15013).